Reading from the N-terminus, the 135-residue chain is 6,7-dimethyl-8-ribityllumazine synthase (135 aa).

Residues F12, 44–46, and 68–70 each bind 5-amino-6-(D-ribitylamino)uracil; these read AYD and CVI. 73-74 lines the (2S)-2-hydroxy-3-oxobutyl phosphate pocket; sequence AT. Catalysis depends on H76, which acts as the Proton donor. L101 is a 5-amino-6-(D-ribitylamino)uracil binding site. R116 provides a ligand contact to (2S)-2-hydroxy-3-oxobutyl phosphate.

This sequence belongs to the DMRL synthase family.

It catalyses the reaction (2S)-2-hydroxy-3-oxobutyl phosphate + 5-amino-6-(D-ribitylamino)uracil = 6,7-dimethyl-8-(1-D-ribityl)lumazine + phosphate + 2 H2O + H(+). The protein operates within cofactor biosynthesis; riboflavin biosynthesis; riboflavin from 2-hydroxy-3-oxobutyl phosphate and 5-amino-6-(D-ribitylamino)uracil: step 1/2. Catalyzes the formation of 6,7-dimethyl-8-ribityllumazine by condensation of 5-amino-6-(D-ribitylamino)uracil with 3,4-dihydroxy-2-butanone 4-phosphate. This is the penultimate step in the biosynthesis of riboflavin. In Methanoculleus marisnigri (strain ATCC 35101 / DSM 1498 / JR1), this protein is 6,7-dimethyl-8-ribityllumazine synthase.